The sequence spans 408 residues: Peptidase T (408 aa).

His-78 is a binding site for Zn(2+). Asp-80 is an active-site residue. Asp-140 contributes to the Zn(2+) binding site. The active-site Proton acceptor is the Glu-173. Zn(2+)-binding residues include Glu-174, Asp-196, and His-379.

The protein belongs to the peptidase M20B family. Zn(2+) serves as cofactor.

Its subcellular location is the cytoplasm. It carries out the reaction Release of the N-terminal residue from a tripeptide.. Functionally, cleaves the N-terminal amino acid of tripeptides. The polypeptide is Peptidase T (Shigella boydii serotype 18 (strain CDC 3083-94 / BS512)).